Consider the following 380-residue polypeptide: Probable cytosolic iron-sulfur protein assembly protein 1 (380 aa).

7 WD repeats span residues 10 to 49 (AHND…KFPL), 56 to 108 (THKR…VEYD), 135 to 175 (GHEN…EEFE), 182 to 221 (DHSQ…DEWS), 228 to 275 (GHEG…EEDK), 299 to 338 (VHKY…KWVI), and 346 to 380 (HGVH…LWNV).

This sequence belongs to the WD repeat CIA1 family. In terms of assembly, interacts with NAR1.

The protein localises to the cytoplasm. It localises to the nucleus. Essential component of the cytosolic iron-sulfur (Fe/S) protein assembly machinery. Required for the maturation of extramitochondrial Fe/S proteins. In Candida dubliniensis (strain CD36 / ATCC MYA-646 / CBS 7987 / NCPF 3949 / NRRL Y-17841) (Yeast), this protein is Probable cytosolic iron-sulfur protein assembly protein 1.